Here is a 1388-residue protein sequence, read N- to C-terminus: CRISPR-associated endonuclease Cas9 2 (1388 aa).

The active-site For RuvC-like nuclease domain is the D10. The Mg(2+) site is built by D10, E763, and E767. Residues 771 to 928 (TNQGKSNSQQ…DKAGFIQRQL (158 aa)) enclose the HNH Cas9-type domain. H847 functions as the Proton acceptor for HNH nuclease domain in the catalytic mechanism. Mg(2+) is bound at residue H990. Residues 1100-1109 (EQNHGLDRGK) show a composition bias toward basic and acidic residues. The disordered stretch occupies residues 1100–1130 (EQNHGLDRGKPKGLFNANLSSKPKPNSNENL). The segment at 1102-1388 (NHGLDRGKPK…RIDLAKLGEG (287 aa)) is PAM-interacting domain (PI). A compositionally biased stretch (polar residues) spans 1116 to 1129 (ANLSSKPKPNSNEN).

This sequence belongs to the CRISPR-associated protein Cas9 family. Subtype II-A subfamily. In terms of assembly, monomer. Binds crRNA and tracrRNA. Mg(2+) serves as cofactor.

Functionally, CRISPR (clustered regularly interspaced short palindromic repeat) is an adaptive immune system that provides protection against mobile genetic elements (viruses, transposable elements and conjugative plasmids). CRISPR clusters contain spacers, sequences complementary to antecedent mobile elements, and target invading nucleic acids. CRISPR clusters are transcribed and processed into CRISPR RNA (crRNA). In type II CRISPR systems correct processing of pre-crRNA requires a trans-encoded small RNA (tracrRNA), endogenous ribonuclease 3 (rnc) and this protein. The tracrRNA serves as a guide for ribonuclease 3-aided processing of pre-crRNA. Subsequently Cas9/crRNA/tracrRNA endonucleolytically cleaves linear or circular dsDNA target complementary to the spacer yielding blunt ends; Cas9 is inactive in the absence of the 2 guide RNAs (gRNA). Cas9 recognizes a 3'-G-rich protospacer adjacent motif (PAM, GGG in this organism) in the CRISPR repeat sequences to help distinguish self versus nonself, as targets within the bacterial CRISPR locus do not have PAMs. PAM recognition is also required for catalytic activity. Complements the gRNA coprocessing defect in a cas9 deletion in S.pyogenes strain 370, and cuts target DNA in Cas9:gRNAs mixing experiments with S.mutans strain UA159. The protein is CRISPR-associated endonuclease Cas9 2 of Streptococcus thermophilus (strain ATCC BAA-491 / LMD-9).